Reading from the N-terminus, the 365-residue chain is Sulfate/thiosulfate import ATP-binding protein CysA (365 aa).

The 235-residue stretch at I3–M237 folds into the ABC transporter domain. G35–T42 contacts ATP.

The protein belongs to the ABC transporter superfamily. Sulfate/tungstate importer (TC 3.A.1.6) family. As to quaternary structure, the complex is composed of two ATP-binding proteins (CysA), two transmembrane proteins (CysT and CysW) and a solute-binding protein (CysP).

The protein resides in the cell inner membrane. It carries out the reaction sulfate(out) + ATP + H2O = sulfate(in) + ADP + phosphate + H(+). The enzyme catalyses thiosulfate(out) + ATP + H2O = thiosulfate(in) + ADP + phosphate + H(+). Functionally, part of the ABC transporter complex CysAWTP involved in sulfate/thiosulfate import. Responsible for energy coupling to the transport system. This chain is Sulfate/thiosulfate import ATP-binding protein CysA, found in Shigella flexneri.